The chain runs to 369 residues: Phosphoribosyl pyrophosphate synthase-associated protein 2 (369 aa).

Methionine 1 bears the N-acetylmethionine mark. At threonine 5 the chain carries Phosphothreonine. Phosphoserine is present on residues serine 219, serine 227, and serine 233.

This sequence belongs to the ribose-phosphate pyrophosphokinase family. In terms of assembly, binds to PRPS1 and PRPS2. In terms of tissue distribution, ubiquitous.

Functionally, seems to play a negative regulatory role in 5-phosphoribose 1-diphosphate synthesis. In Homo sapiens (Human), this protein is Phosphoribosyl pyrophosphate synthase-associated protein 2 (PRPSAP2).